The sequence spans 76 residues: Esculentin-2CG1 (76 aa).

The first 22 residues, 1–22 (MFTMKKSMLLLFFLGTISLSLC), serve as a signal peptide directing secretion. Residues 23 to 37 (EEERSADEDDGEEEV) constitute a propeptide, removed in mature form. Cysteines 70 and 76 form a disulfide.

In terms of tissue distribution, expressed by the skin glands.

It is found in the secreted. Antimicrobial peptide active against a variety of Gram-positive and some Gram-negative bacterial strains. Has antifungal activity against a slime mold isolate. Has hemolytic activity against human erythrocytes. The polypeptide is Esculentin-2CG1 (Amolops chunganensis (Chungan torrent frog)).